Reading from the N-terminus, the 220-residue chain is Deoxyribose-phosphate aldolase (220 aa).

Asp89 serves as the catalytic Proton donor/acceptor. Lys151 (schiff-base intermediate with acetaldehyde) is an active-site residue. Lys180 serves as the catalytic Proton donor/acceptor.

It belongs to the DeoC/FbaB aldolase family. DeoC type 1 subfamily.

It is found in the cytoplasm. It carries out the reaction 2-deoxy-D-ribose 5-phosphate = D-glyceraldehyde 3-phosphate + acetaldehyde. Its pathway is carbohydrate degradation; 2-deoxy-D-ribose 1-phosphate degradation; D-glyceraldehyde 3-phosphate and acetaldehyde from 2-deoxy-alpha-D-ribose 1-phosphate: step 2/2. Catalyzes a reversible aldol reaction between acetaldehyde and D-glyceraldehyde 3-phosphate to generate 2-deoxy-D-ribose 5-phosphate. This chain is Deoxyribose-phosphate aldolase, found in Streptococcus suis (strain 05ZYH33).